A 336-amino-acid chain; its full sequence is Speedy protein E1 (336 aa).

Residues 16–50 (GVDPSPPCRSLGWKRKREWSDESEEEPEKELAPEP) form a disordered region. The span at 36–50 (DESEEEPEKELAPEP) shows a compositional bias: acidic residues.

It belongs to the Speedy/Ringo family. Predominantly expressed in testis and heart.

This chain is Speedy protein E1, found in Homo sapiens (Human).